The sequence spans 265 residues: Phosphatidylserine decarboxylase proenzyme (265 aa).

Catalysis depends on charge relay system; for autoendoproteolytic cleavage activity residues Asp-86, His-142, and Ser-226. Ser-226 serves as the catalytic Schiff-base intermediate with substrate; via pyruvic acid; for decarboxylase activity. Ser-226 carries the post-translational modification Pyruvic acid (Ser); by autocatalysis.

It belongs to the phosphatidylserine decarboxylase family. PSD-B subfamily. Prokaryotic type I sub-subfamily. In terms of assembly, heterodimer of a large membrane-associated beta subunit and a small pyruvoyl-containing alpha subunit. The cofactor is pyruvate. Is synthesized initially as an inactive proenzyme. Formation of the active enzyme involves a self-maturation process in which the active site pyruvoyl group is generated from an internal serine residue via an autocatalytic post-translational modification. Two non-identical subunits are generated from the proenzyme in this reaction, and the pyruvate is formed at the N-terminus of the alpha chain, which is derived from the carboxyl end of the proenzyme. The autoendoproteolytic cleavage occurs by a canonical serine protease mechanism, in which the side chain hydroxyl group of the serine supplies its oxygen atom to form the C-terminus of the beta chain, while the remainder of the serine residue undergoes an oxidative deamination to produce ammonia and the pyruvoyl prosthetic group on the alpha chain. During this reaction, the Ser that is part of the protease active site of the proenzyme becomes the pyruvoyl prosthetic group, which constitutes an essential element of the active site of the mature decarboxylase.

It localises to the cell membrane. The enzyme catalyses a 1,2-diacyl-sn-glycero-3-phospho-L-serine + H(+) = a 1,2-diacyl-sn-glycero-3-phosphoethanolamine + CO2. It functions in the pathway phospholipid metabolism; phosphatidylethanolamine biosynthesis; phosphatidylethanolamine from CDP-diacylglycerol: step 2/2. In terms of biological role, catalyzes the formation of phosphatidylethanolamine (PtdEtn) from phosphatidylserine (PtdSer). The sequence is that of Phosphatidylserine decarboxylase proenzyme from Anoxybacillus flavithermus (strain DSM 21510 / WK1).